The primary structure comprises 282 residues: Large ribosomal subunit protein uL4c (282 aa).

The N-terminal 49 residues, 1–49 (MASSATAPNSLSFFSSSLFLSSSHQIPKTYISVSKLGSGRVSKPLSVSS), are a transit peptide targeting the chloroplast. Residues 106–138 (EVRGGGIKPYSQKKTGHARRGSQRTPLRPGGGV) are disordered.

Belongs to the universal ribosomal protein uL4 family. As to quaternary structure, part of the 50S ribosomal subunit.

The protein resides in the plastid. It is found in the chloroplast. Its function is as follows. This protein binds directly and specifically to 23S rRNA. May play a role in plastid transcriptional regulation. This Arabidopsis thaliana (Mouse-ear cress) protein is Large ribosomal subunit protein uL4c (RPL4).